The primary structure comprises 352 residues: E3 ubiquitin-protein ligase RNF146 (352 aa).

Residues 36 to 74 form an RING-type zinc finger; sequence CAICLQTCVHPVSLPCKHVFCYLCVKGASWLGKRCALCR. Residues K84 and K94 each participate in a glycyl lysine isopeptide (Lys-Gly) (interchain with G-Cter in ubiquitin) cross-link. Positions 91 to 167 constitute a WWE domain; that stretch reads EELKAASRGN…EHGRRRKIKR (77 aa). Residues Y107, R110, and W114 each coordinate a glycoprotein. K130 participates in a covalent cross-link: Glycyl lysine isopeptide (Lys-Gly) (interchain with G-Cter in ubiquitin). The a glycoprotein site is built by Y144, Q153, R163, and K175. Residue K175 forms a Glycyl lysine isopeptide (Lys-Gly) (interchain with G-Cter in ubiquitin) linkage. 3 disordered regions span residues 195–242, 259–293, and 317–352; these read SSAD…AGAS, ERSHRGEGEEDHESPSSGRVPDTSTEETESDASSD, and NQTVAERSDRPVAGGGTMSVNVRSRRPDGQCTVTEV. The span at 197-210 shows a compositional bias: low complexity; that stretch reads ADGADSGSAHTGAS. Over residues 215-233 the composition is skewed to polar residues; the sequence is VPSSTRPLTSVDGQLTSPV. Over residues 282–293 the composition is skewed to acidic residues; that stretch reads STEETESDASSD. A phosphoserine mark is found at S288 and S292.

As to quaternary structure, can form homooligomers. Interacts with PARsylated AXIN1, AXIN2, BLZF1, CASC3, H1-2, IPO7, LIG3, NCL, PARP1, XRCC1, XRCC5 and XRCC6. Interacts with DDB1, DHX15, IQGAP1, LRPPRC, PARP2, PRKDC, RUVBL2, TNKS1 and TNKS2. Binding often leads to interactor ubiquitination, in the presence of the appropriate E1 and E2 enzymes, and proteasomal degradation. Post-translationally, ubiquitinated; autoubiquitinated. Autoubiquitination is enhanced upon poly(ADP-ribose)-binding.

It is found in the cytoplasm. The protein localises to the cytosol. It localises to the nucleus. The enzyme catalyses S-ubiquitinyl-[E2 ubiquitin-conjugating enzyme]-L-cysteine + [acceptor protein]-L-lysine = [E2 ubiquitin-conjugating enzyme]-L-cysteine + N(6)-ubiquitinyl-[acceptor protein]-L-lysine.. The protein operates within protein modification; protein ubiquitination. Its function is as follows. E3 ubiquitin-protein ligase that specifically binds poly-ADP-ribosylated (PARsylated) proteins and mediates their ubiquitination and subsequent degradation. May regulate many important biological processes, such as cell survival and DNA damage response. Acts as an activator of the Wnt signaling pathway by mediating the ubiquitination of PARsylated AXIN1 and AXIN2, 2 key components of the beta-catenin destruction complex. Acts in cooperation with tankyrase proteins (TNKS and TNKS2), which mediate PARsylation of target proteins AXIN1, AXIN2, BLZF1, CASC3, TNKS and TNKS2. Recognizes and binds tankyrase-dependent PARsylated proteins via its WWE domain and mediates their ubiquitination, leading to their degradation. Different ubiquitin linkage types have been observed: TNKS2 undergoes ubiquitination at 'Lys-48' and 'Lys-63', while AXIN1 is only ubiquitinated at 'Lys-48'. May regulate TNKS and TNKS2 subcellular location, preventing aggregation at a centrosomal location. Neuroprotective protein. Protects the brain against N-methyl-D-aspartate (NMDA) receptor-mediated glutamate excitotoxicity and ischemia, by interfering with PAR-induced cell death, called parthanatos. Prevents nuclear translocation of AIFM1 in a PAR-binding dependent manner. Does not affect PARP1 activation. Protects against cell death induced by DNA damaging agents, such as N-methyl-N-nitro-N-nitrosoguanidine (MNNG) and rescues cells from G1 arrest. Promotes cell survival after gamma-irradiation. Facilitates DNA repair. The polypeptide is E3 ubiquitin-protein ligase RNF146 (Rnf146) (Rattus norvegicus (Rat)).